The chain runs to 842 residues: Protein P (842 aa).

A terminal protein domain (TP) region spans residues 1–177 (MPLSYQHFRR…FCGSPYTWEQ (177 aa)). Residues 178 to 345 (DLQHGAFLDG…YCLSHLVNLL (168 aa)) are spacer. Positions 184–238 (FLDGPSRVGKEPFHQQSSRIPSRSPVGPSIQSKYQQSRLGLQSQKGPLARGQQGR) are disordered. The span at 212–228 (SIQSKYQQSRLGLQSQK) shows a compositional bias: polar residues. A polymerase/reverse transcriptase domain (RT) region spans residues 346 to 689 (QDWGPCTEHG…YMNLYPVARQ (344 aa)). The Reverse transcriptase domain occupies 356–599 (EYHIRIPRTP…YSLNFMGYVI (244 aa)). Mg(2+) is bound by residues D428, D550, and D551.

This sequence belongs to the hepadnaviridae P protein family.

It carries out the reaction DNA(n) + a 2'-deoxyribonucleoside 5'-triphosphate = DNA(n+1) + diphosphate. The enzyme catalyses Endonucleolytic cleavage to 5'-phosphomonoester.. Its activity is regulated as follows. Activated by host HSP70 and HSP40 in vitro to be able to bind the epsilon loop of the pgRNA. Because deletion of the RNase H region renders the protein partly chaperone-independent, the chaperones may be needed indirectly to relieve occlusion of the RNA-binding site by this domain. Inhibited by several reverse-transcriptase inhibitors: Lamivudine, Adefovir and Entecavir. Multifunctional enzyme that converts the viral RNA genome into dsDNA in viral cytoplasmic capsids. This enzyme displays a DNA polymerase activity that can copy either DNA or RNA templates, and a ribonuclease H (RNase H) activity that cleaves the RNA strand of RNA-DNA heteroduplexes in a partially processive 3'- to 5'-endonucleasic mode. Neo-synthesized pregenomic RNA (pgRNA) are encapsidated together with the P protein, and reverse-transcribed inside the nucleocapsid. Initiation of reverse-transcription occurs first by binding the epsilon loop on the pgRNA genome, and is initiated by protein priming, thereby the 5'-end of (-)DNA is covalently linked to P protein. Partial (+)DNA is synthesized from the (-)DNA template and generates the relaxed circular DNA (RC-DNA) genome. After budding and infection, the RC-DNA migrates in the nucleus, and is converted into a plasmid-like covalently closed circular DNA (cccDNA). The activity of P protein does not seem to be necessary for cccDNA generation, and is presumably released from (+)DNA by host nuclear DNA repair machinery. The chain is Protein P from Hepatitis B virus genotype G (isolate United States/USG17/2002) (HBV-G).